The chain runs to 152 residues: CASP-like protein 5C1 (152 aa).

At 1–12 the chain is on the cytoplasmic side; sequence MVRTTASFGTSS. Residues 13-33 form a helical membrane-spanning segment; the sequence is SFVLRLGQTLFSSASLLFMCF. The Extracellular segment spans residues 34–44; sequence NDDEDFYAYTT. The chain crosses the membrane as a helical span at residues 45–65; sequence FCYLVTVMGLVTPWSVTLALM. The Cytoplasmic segment spans residues 66–80; it reads EAYSILVKKLPMQAT. The helical transmembrane segment at 81-101 threads the bilayer; sequence VISVIVAGDFVLSFLSLGGAC. Over 102 to 126 the chain is Extracellular; sequence STASVAVLLMDAGEKQCDRYKLSAT. Residues 127-147 form a helical membrane-spanning segment; it reads MAFLSSFLSFASTFFNFCLLP. The Cytoplasmic segment spans residues 148 to 152; the sequence is SLMSH.

This sequence belongs to the Casparian strip membrane proteins (CASP) family. As to quaternary structure, homodimer and heterodimers.

The protein resides in the cell membrane. This chain is CASP-like protein 5C1, found in Arabidopsis thaliana (Mouse-ear cress).